We begin with the raw amino-acid sequence, 902 residues long: DNA mismatch repair protein MutS (902 aa).

654-661 (GPNMGGKS) is an ATP binding site.

This sequence belongs to the DNA mismatch repair MutS family.

In terms of biological role, this protein is involved in the repair of mismatches in DNA. It is possible that it carries out the mismatch recognition step. This protein has a weak ATPase activity. The chain is DNA mismatch repair protein MutS from Xanthomonas axonopodis pv. citri (strain 306).